Reading from the N-terminus, the 163-residue chain is Probable ribosome biogenesis protein RLP24 (163 aa).

The protein belongs to the eukaryotic ribosomal protein eL24 family. Associated with nucleolar and cytoplasmic pre-60S particles. At the end of biogenesis it dissociates from cytoplasmic pre-60S particles and is likely to be exchanged for its ribosomal homolog, RPL24.

The protein resides in the nucleus. Its subcellular location is the nucleolus. Its function is as follows. Involved in the biogenesis of the 60S ribosomal subunit. Ensures the docking of GTPBP4/NOG1 to pre-60S particles. The protein is Probable ribosome biogenesis protein RLP24 (RSL24D1) of Pongo abelii (Sumatran orangutan).